Consider the following 360-residue polypeptide: Protein Wnt-2 (360 aa).

Positions 1 to 25 are cleaved as a signal peptide; the sequence is MNAPLGGIWLWLPLLLTWLSPEVSS. 11 disulfide bridges follow: C76–C87, C127–C135, C137–C157, C206–C220, C208–C215, C278–C309, C294–C304, C308–C348, C324–C339, C326–C336, and C331–C332. S212 carries O-palmitoleoyl serine; by PORCN lipidation. A glycan (N-linked (GlcNAc...) asparagine) is linked at N295.

The protein belongs to the Wnt family. In terms of processing, palmitoleoylation is required for efficient binding to frizzled receptors. Depalmitoleoylation leads to Wnt signaling pathway inhibition.

It localises to the secreted. Its subcellular location is the extracellular space. The protein localises to the extracellular matrix. Ligand for members of the frizzled family of seven transmembrane receptors. Probable developmental protein. May be a signaling molecule which affects the development of discrete regions of tissues. Is likely to signal over only few cell diameters. The polypeptide is Protein Wnt-2 (WNT2) (Carollia perspicillata (Seba's short-tailed bat)).